Consider the following 441-residue polypeptide: DNA-binding protein (441 aa).

A compositionally biased stretch (basic residues) spans 1-18 (MERTPKRAHGFRSTKPVK). The segment at 1–85 (MERTPKRAHG…EESPEAPLSD (85 aa)) is disordered. Acidic residues-rich tracts occupy residues 24 to 33 (MMEEEEEEVE) and 67 to 79 (VDDEENASDEESP). The Zn(2+) site is built by C191 and H193. The flexible loop stretch occupies residues 204–236 (VELNPSSEAGKRALAEQNGVIEKNRFGRQVVVL). C244, C262, C305, C307, C359, and C380 together coordinate Zn(2+). The interval 426–441 (EVLAPVSPIASDDPFA) is C-terminal arm, DBP binding.

The protein belongs to the adenoviridae E2A DNA-binding protein family. In terms of assembly, homomultimerizes on viral ssDNA bound to pTP. Forms a initiation complex with viral polymerase, pTP and hosts NFIA and POU2F1/OCT1. Interacts with host SRCAP.

The protein resides in the host nucleus. In terms of biological role, plays a role in the elongation phase of viral strand displacement replication by unwinding the template in an ATP-independent fashion, employing its capacity to form multimers. Also enhances the rate of initiation. Released from template upon second strand synthesis. Assembles in complex with viral pTP, viral pol, host NFIA and host POU2F1/OCT1 on viral origin of replication. Covers the whole ssDNA genome during synthesis. The complementary strand synthesis induces its relese from DNA template. May inhibit cellular transcription mediated by the interaction between host SRCAP and CBP. This Fowl adenovirus A serotype 1 (strain CELO / Phelps) (FAdV-1) protein is DNA-binding protein.